Consider the following 142-residue polypeptide: Ig heavy chain V region IR2 (142 aa).

A signal peptide spans 1 to 19; it reads MDLRLTYVFIVAILKGVLC. An Ig-like domain is found at 20–133; sequence EVKLEESGGG…YSENWFVYWG (114 aa).

The sequence is that of Ig heavy chain V region IR2 from Rattus norvegicus (Rat).